A 50-amino-acid polypeptide reads, in one-letter code: Light-harvesting protein B-870 beta chain (50 aa).

Residues A2–S22 lie on the Cytoplasmic side of the membrane. 2 residues coordinate a bacteriochlorophyll: H21 and H39. Residues V23–W45 traverse the membrane as a helical segment. The Periplasmic portion of the chain corresponds to R46 to G50.

Belongs to the antenna complex beta subunit family. The core complex is formed by different alpha and beta chains, binding bacteriochlorophyll molecules, and arranged most probably in tetrameric structures disposed around the reaction center. The non-pigmented gamma chains may constitute additional components.

It localises to the cell inner membrane. Antenna complexes are light-harvesting systems, which transfer the excitation energy to the reaction centers. The sequence is that of Light-harvesting protein B-870 beta chain (pufB) from Roseobacter denitrificans (strain ATCC 33942 / OCh 114) (Erythrobacter sp. (strain OCh 114)).